Here is a 434-residue protein sequence, read N- to C-terminus: Angio-associated migratory cell protein (434 aa).

Positions 1 to 63 (MESESESGAA…EEEEEEGNEE (63 aa)) are disordered. At S20 the chain carries Phosphoserine. Residues 39 to 62 (DPDDLAQEMEDVDFEEEEEEEGNE) are compositionally biased toward acidic residues. 8 WD repeats span residues 89 to 129 (LHSA…LLFE), 132 to 171 (GHKDSVTCAGFSHDSTLVATGDMSGLLKVWQVDTKEEVWS), 173 to 212 (EAGDLEWMEWHPRAPVLLAGTADGNTWMWKVPNGDCKTFQ), 214 to 254 (PNCP…HVLK), 258 to 299 (GHQG…GVFR), 315 to 354 (SESNSVESLGFCSVMPLAAVGYLDGTLAIYDLATQTLRHQ), 356 to 395 (QHQSGIVQLLWEAGTAVVYTCSLDGIVRLWDARTGRLLTD), and 398 to 433 (GHTAEILDFALSKDASLVVTTSGDHKAKVFCVQRPD).

The protein resides in the cell membrane. It localises to the cytoplasm. Plays a role in angiogenesis and cell migration. In smooth muscle cell migration, may act through the RhoA pathway. The polypeptide is Angio-associated migratory cell protein (AAMP) (Pongo abelii (Sumatran orangutan)).